Here is a 342-residue protein sequence, read N- to C-terminus: Delta(6)-protoilludene synthase 8 (342 aa).

Asp81 is a Mg(2+) binding site. A DDXXD motif motif is present at residues 93–97 (RDMVD). 3 residues coordinate Mg(2+): Asn217, Ser221, and Glu225. The short motif at 217-225 (NDLVSYNRE) is the NSE/DTE motif element. Residues Arg305 and Tyr306 each contribute to the (2E,6E)-farnesyl diphosphate site.

Belongs to the terpene synthase family. The cofactor is Mg(2+).

It catalyses the reaction (2E,6E)-farnesyl diphosphate = Delta(6)-protoilludene + diphosphate. Functionally, terpene cyclase that catalyzes the cyclization of farnesyl diphosphate (FPP) to delta(6)-protoilludene. The polypeptide is Delta(6)-protoilludene synthase 8 (Postia placenta (strain ATCC 44394 / Madison 698-R) (Brown rot fungus)).